The sequence spans 497 residues: Cobyric acid synthase (497 aa).

The region spanning 251–443 (DLKIGVVWYP…LHGLFDNDFF (193 aa)) is the GATase cobBQ-type domain. The active-site Nucleophile is the cysteine 333. Histidine 435 is a catalytic residue.

It belongs to the CobB/CobQ family. CobQ subfamily.

It functions in the pathway cofactor biosynthesis; adenosylcobalamin biosynthesis. In terms of biological role, catalyzes amidations at positions B, D, E, and G on adenosylcobyrinic A,C-diamide. NH(2) groups are provided by glutamine, and one molecule of ATP is hydrogenolyzed for each amidation. The chain is Cobyric acid synthase from Carboxydothermus hydrogenoformans (strain ATCC BAA-161 / DSM 6008 / Z-2901).